Reading from the N-terminus, the 391-residue chain is Alanine racemase, biosynthetic (391 aa).

Lys52 acts as the Proton acceptor; specific for D-alanine in catalysis. An N6-(pyridoxal phosphate)lysine modification is found at Lys52. Arg149 contributes to the substrate binding site. Tyr271 serves as the catalytic Proton acceptor; specific for L-alanine. Substrate is bound at residue Met330.

Belongs to the alanine racemase family. It depends on pyridoxal 5'-phosphate as a cofactor.

The catalysed reaction is L-alanine = D-alanine. The protein operates within amino-acid biosynthesis; D-alanine biosynthesis; D-alanine from L-alanine: step 1/1. It functions in the pathway cell wall biogenesis; peptidoglycan biosynthesis. In terms of biological role, catalyzes the interconversion of L-alanine and D-alanine. Provides the D-alanine required for cell wall biosynthesis. The protein is Alanine racemase, biosynthetic (alr) of Agrobacterium fabrum (strain C58 / ATCC 33970) (Agrobacterium tumefaciens (strain C58)).